The primary structure comprises 100 residues: Small ribosomal subunit protein uS14 (100 aa).

This sequence belongs to the universal ribosomal protein uS14 family. In terms of assembly, part of the 30S ribosomal subunit. Contacts proteins S3 and S10.

Functionally, binds 16S rRNA, required for the assembly of 30S particles and may also be responsible for determining the conformation of the 16S rRNA at the A site. The chain is Small ribosomal subunit protein uS14 from Synechococcus sp. (strain RCC307).